A 489-amino-acid polypeptide reads, in one-letter code: IPT/TIG domain-containing protein BACOVA_02650 (489 aa).

A signal peptide spans 1–27; it reads MKSIYKYLDTRLFLIGLLVLPFLAVVS. A lipid anchor (N-palmitoyl cysteine) is attached at Cys28. Cys28 carries S-diacylglycerol cysteine lipidation. IPT/TIG domains follow at residues 57–103, 136–204, and 232–304; these read VNPG…PNEL, PYIT…TAPA, and PVVT…AIGG.

It is found in the cell outer membrane. The protein operates within glucan metabolism; xyloglucan degradation. Its function is as follows. Polysaccharide-binding protein present at the surface of the cell. Probably mediates xyloglucan-binding before xyloglucan transport in the periplasm for degradation. This chain is IPT/TIG domain-containing protein BACOVA_02650, found in Bacteroides ovatus (strain ATCC 8483 / DSM 1896 / JCM 5824 / BCRC 10623 / CCUG 4943 / NCTC 11153).